The primary structure comprises 169 residues: N-alpha-acetyltransferase 50 (169 aa).

The 150-residue stretch at 6 to 155 (IELGDVTPHN…DAHVLQKNLK (150 aa)) folds into the N-acetyltransferase domain. A Phosphothreonine modification is found at Thr-12. Substrate is bound at residue Tyr-31. An N6-acetyllysine mark is found at Lys-34 and Lys-37. Residue Tyr-73 is part of the active site. Met-75 is a substrate binding site. 77 to 90 (LGCLAPYRRLGIGT) contributes to the acetyl-CoA binding site. A Phosphotyrosine modification is found at Tyr-110. The active site involves His-112. Position 117–126 (117–126 (NESAIDFYRK)) interacts with CoA. Residues 138-141 (YYKR) are substrate. Lys-140 carries the N6-acetyllysine modification.

This sequence belongs to the acetyltransferase family. GNAT subfamily. Component of the N-terminal acetyltransferase E (NatE) complex at least composed of NAA10, NAA15 and NAA50. Interacts with NAA10. Interacts with NAA15. Predominantly interacts with NAA15 in the N-terminal acetyltransferase A complex (NatA complex); the interactions reduce the acetylation activity of the NatA complex. Component of the N-terminal acetyltransferase E (NatE)/HYPK complex at least composed of NAA10, NAA15, NAA50 and HYPK. Within the complex interacts with NAA15. Its capacity to interact with the NatA complex is reduced by HYPK. Interacts with NAA35.

It localises to the cytoplasm. The protein resides in the nucleus. The enzyme catalyses N-terminal L-methionyl-L-alanyl-[protein] + acetyl-CoA = N-terminal N(alpha)-acetyl-L-methionyl-L-alanyl-[protein] + CoA + H(+). It catalyses the reaction N-terminal L-methionyl-L-seryl-[protein] + acetyl-CoA = N-terminal N(alpha)-acetyl-L-methionyl-L-seryl-[protein] + CoA + H(+). It carries out the reaction N-terminal L-methionyl-L-valyl-[protein] + acetyl-CoA = N-terminal N(alpha)-acetyl-L-methionyl-L-valyl-[protein] + CoA + H(+). The catalysed reaction is N-terminal L-methionyl-L-threonyl-[protein] + acetyl-CoA = N-terminal N(alpha)-acetyl-L-methionyl-L-threonyl-[protein] + CoA + H(+). The enzyme catalyses N-terminal L-methionyl-L-lysyl-[protein] + acetyl-CoA = N-terminal N(alpha)-acetyl-L-methionyl-L-lysyl-[protein] + CoA + H(+). It catalyses the reaction N-terminal L-methionyl-L-leucyl-[protein] + acetyl-CoA = N-terminal N(alpha)-acetyl-L-methionyl-L-leucyl-[protein] + CoA + H(+). It carries out the reaction N-terminal L-methionyl-L-phenylalanyl-[protein] + acetyl-CoA = N-terminal N(alpha)-acetyl-L-methionyl-L-phenylalanyl-[protein] + CoA + H(+). The catalysed reaction is N-terminal L-methionyl-L-tyrosyl-[protein] + acetyl-CoA = N-terminal N(alpha)-acetyl-L-methionyl-L-tyrosyl-[protein] + CoA + H(+). Functionally, N-alpha-acetyltransferase that acetylates the N-terminus of proteins that retain their initiating methionine. Has a broad substrate specificity: able to acetylate the initiator methionine of most peptides, except for those with a proline in second position. Also displays N-epsilon-acetyltransferase activity by mediating acetylation of the side chain of specific lysines on proteins. Autoacetylates in vivo. The relevance of N-epsilon-acetyltransferase activity is however unclear: able to acetylate H4 in vitro, but this result has not been confirmed in vivo. Component of N-alpha-acetyltransferase complexes containing NAA10 and NAA15, which has N-alpha-acetyltransferase activity. Does not influence the acetyltransferase activity of NAA10. However, it negatively regulates the N-alpha-acetyltransferase activity of the N-terminal acetyltransferase A complex (also called the NatA complex). The multiprotein complexes probably constitute the major contributor for N-terminal acetylation at the ribosome exit tunnel, with NAA10 acetylating all amino termini that are devoid of methionine and NAA50 acetylating other peptides. Required for sister chromatid cohesion during mitosis by promoting binding of CDCA5/sororin to cohesin: may act by counteracting the function of NAA10. In Bos taurus (Bovine), this protein is N-alpha-acetyltransferase 50 (NAA50).